The sequence spans 342 residues: Nicotinate-nucleotide--dimethylbenzimidazole phosphoribosyltransferase (342 aa).

Catalysis depends on E311, which acts as the Proton acceptor.

Belongs to the CobT family.

It carries out the reaction 5,6-dimethylbenzimidazole + nicotinate beta-D-ribonucleotide = alpha-ribazole 5'-phosphate + nicotinate + H(+). It functions in the pathway nucleoside biosynthesis; alpha-ribazole biosynthesis; alpha-ribazole from 5,6-dimethylbenzimidazole: step 1/2. Its function is as follows. Catalyzes the synthesis of alpha-ribazole-5'-phosphate from nicotinate mononucleotide (NAMN) and 5,6-dimethylbenzimidazole (DMB). The chain is Nicotinate-nucleotide--dimethylbenzimidazole phosphoribosyltransferase from Vibrio atlanticus (strain LGP32) (Vibrio splendidus (strain Mel32)).